The following is a 562-amino-acid chain: Catalase T (562 aa).

Active-site residues include histidine 64 and asparagine 137. Heme is bound at residue tyrosine 351.

Belongs to the catalase family. As to quaternary structure, homotetramer. Requires heme as cofactor.

It is found in the cytoplasm. It carries out the reaction 2 H2O2 = O2 + 2 H2O. Its function is as follows. Occurs in almost all aerobically respiring organisms and serves to protect cells from the toxic effects of hydrogen peroxide. The chain is Catalase T (CTT1) from Saccharomyces cerevisiae (strain ATCC 204508 / S288c) (Baker's yeast).